Here is a 640-residue protein sequence, read N- to C-terminus: Chaperone protein DnaK (640 aa).

Residue threonine 196 is modified to Phosphothreonine; by autocatalysis. The span at 547–569 shows a compositional bias: basic and acidic residues; it reads GDKIPSDKRPALEGALEKLKDAT. Disordered stretches follow at residues 547–575 and 595–640; these read GDKI…GTTE and LYQA…GNGK. Over residues 603-615 the composition is skewed to polar residues; sequence TNASEPTQNTDGS. Acidic residues predominate over residues 625 to 634; sequence GEVENAEFEV.

The protein belongs to the heat shock protein 70 family.

Acts as a chaperone. The sequence is that of Chaperone protein DnaK from Chlorobium phaeobacteroides (strain DSM 266 / SMG 266 / 2430).